The sequence spans 327 residues: MFDAAPIKKVSVVIPVYNEQESLPELIRRTTTACESLGKAWEILLIDDGSSDSSAELMVKASQEADSHIISILLNRNYGQHAAIMAGFSHVSGDLIITLDADLQNPPEEIPRLVAKADEGFDVVGTVRQNRQDSLFRKSASKIINLLIQRTTGKAMGDYGCMLRAYRRPIIDTMLRCHERSTFIPILANIFARRATEIPVHHAEREFGDSKYSFMRLINLMYDLVTCLTTTPLRLLSLLGSVIAIGGFSLSVLLIVLRLALGPQWAAEGVFMLFAVLFTFIGAQFIGMGLLGEYIGRIYNDVRARPRYFVQQVIYPESTPFTEESHQ.

Over M1–L235 the chain is Cytoplasmic. The helical transmembrane segment at L236–V256 threads the bilayer. Topologically, residues L257–G269 are periplasmic. Residues V270–L290 traverse the membrane as a helical segment. The Cytoplasmic segment spans residues L291–Q327.

This sequence belongs to the glycosyltransferase 2 family.

It is found in the cell inner membrane. It carries out the reaction UDP-4-deoxy-4-formamido-beta-L-arabinose + di-trans,octa-cis-undecaprenyl phosphate = 4-deoxy-4-formamido-alpha-L-arabinopyranosyl di-trans,octa-cis-undecaprenyl phosphate + UDP. It functions in the pathway glycolipid biosynthesis; 4-amino-4-deoxy-alpha-L-arabinose undecaprenyl phosphate biosynthesis; 4-amino-4-deoxy-alpha-L-arabinose undecaprenyl phosphate from UDP-4-deoxy-4-formamido-beta-L-arabinose and undecaprenyl phosphate: step 1/2. Its pathway is bacterial outer membrane biogenesis; lipopolysaccharide biosynthesis. Catalyzes the transfer of 4-deoxy-4-formamido-L-arabinose from UDP to undecaprenyl phosphate. The modified arabinose is attached to lipid A and is required for resistance to polymyxin and cationic antimicrobial peptides. The polypeptide is Undecaprenyl-phosphate 4-deoxy-4-formamido-L-arabinose transferase (Salmonella agona (strain SL483)).